Reading from the N-terminus, the 395-residue chain is Endophilin-B2 (395 aa).

An N-acetylmethionine modification is found at M1. The segment at 1 to 27 is membrane-binding amphipathic helix; sequence MDFNMKKLASDAGIFFTRAVQFTEEKF. Residue S10 is modified to Phosphoserine. The BAR domain occupies 24–287; sequence EEKFGQAEKT…LGRFPGTFVG (264 aa). 2 coiled-coil regions span residues 116–132 and 206–240; these read IKVA…ERDF and ASAL…LLLE. The SH3 domain occupies 335–395; the sequence is SGTRKARVLY…VPVTYLELLS (61 aa). S395 carries the phosphoserine modification.

It belongs to the endophilin family. In terms of assembly, homodimer, and heterodimer with SH3GLB1. In terms of tissue distribution, detected in skeletal muscle, adipocyte, brain, lung, colon and mammary gland.

The protein localises to the cytoplasm. This is Endophilin-B2 (SH3GLB2) from Homo sapiens (Human).